Reading from the N-terminus, the 1088-residue chain is RNA-directed RNA polymerase (1088 aa).

In terms of domain architecture, RdRp catalytic spans 501 to 687; it reads LSYGDVTRFL…AKRYIAGGKI (187 aa).

It belongs to the reoviridae RNA-directed RNA polymerase family. In terms of assembly, interacts with VP3 (Potential). Interacts with VP2; this interaction activates VP1. Interacts with NSP5; this interaction is probably necessary for the formation of functional virus factories. Interacts with NSP2; this interaction is weak. Mg(2+) serves as cofactor.

It localises to the virion. The catalysed reaction is RNA(n) + a ribonucleoside 5'-triphosphate = RNA(n+1) + diphosphate. Its function is as follows. RNA-directed RNA polymerase that is involved in both transcription and genome replication. Together with VP3 capping enzyme, forms an enzyme complex positioned near the channels situated at each of the five-fold vertices of the core. Following infection, the outermost layer of the virus is lost, leaving a double-layered particle (DLP) made up of the core and VP6 shell. VP1 then catalyzes the transcription of fully conservative plus-strand genomic RNAs that are extruded through the DLP's channels into the cytoplasm where they function as mRNAs for translation of viral proteins. One copy of each of the viral (+)RNAs is also recruited during core assembly, together with newly synthesized polymerase complexes and VP2. The polymerase of these novo-formed particles catalyzes the synthesis of complementary minus-strands leading to dsRNA formation. To do so, the polymerase specifically recognizes and binds 4 bases 5'-UGUG-3' in the conserved 3'-sequence of plus-strand RNA templates. VP2 presumably activates the autoinhibited VP1-RNA complex to coordinate packaging and genome replication. Once dsRNA synthesis is complete, the polymerase switches to the transcriptional mode, thus providing secondary transcription. The protein is RNA-directed RNA polymerase of Homo sapiens (Human).